The following is a 146-amino-acid chain: Phospholipase A2 (146 aa).

Residues 1–18 (MAFLVFAFLTLMAVETYG) form the signal peptide. Cystine bridges form between C44-C137, C46-C62, C61-C117, C67-C144, C68-C110, C77-C103, and C95-C108. 3 residues coordinate Ca(2+): Y45, G47, and G49. Residue H65 is part of the active site. Residue D66 participates in Ca(2+) binding. A glycan (N-linked (GlcNAc...) asparagine) is linked at N85. Residue D111 is part of the active site. An N-linked (GlcNAc...) asparagine glycan is attached at N126.

It depends on Ca(2+) as a cofactor. N-glycosylated. Glycosylated with mannose chains including Man2(GlcNAc), Man2(GlcNAc)2, Man2(GlcNAc)3, Man2(GlcNAc)4 and Man2(GlcNAc)5. As to expression, expressed by the skin glands (at protein level).

The protein resides in the secreted. The enzyme catalyses a 1,2-diacyl-sn-glycero-3-phosphocholine + H2O = a 1-acyl-sn-glycero-3-phosphocholine + a fatty acid + H(+). In terms of biological role, PLA2 catalyzes the calcium-dependent hydrolysis of the 2-acyl groups in 3-sn-phosphoglycerides. This chain is Phospholipase A2, found in Pithecopus azureus (Orange-legged monkey tree frog).